The primary structure comprises 442 residues: Kelch domain-containing protein 10 (442 aa).

Residues 1–58 (MSAAQGWDRNRRRGGGAAGGGGGGSGAGGGSGGNGGRGTGQLNRFVQLSGRPHLPGKK) are disordered. R13 carries the post-translational modification Omega-N-methylarginine. A compositionally biased stretch (gly residues) spans 15-39 (GGAAGGGGGGSGAGGGSGGNGGRGT). Kelch repeat units lie at residues 87-154 (RPPP…PREL), 155-198 (ASMS…ALLS), 199-260 (CRGK…PEER), 261-319 (YRHE…RRCH), 320-364 (SCVQ…PEPV), and 365-403 (YFHCAAVTPAGCMYIHGGVVNIHENKRTGSLFKIWLVVP). The interval 401–442 (VVPSLLELAWEKLLAAFPNLANLSRTQLLHLGLTQGLIERLK) is interaction with CUL2.

Belongs to the KLHDC10 family. As to quaternary structure, component of a CRL2 E3 ubiquitin-protein ligase complex, also named ECS (Elongin BC-CUL2/5-SOCS-box protein) complex, composed of CUL2, Elongin BC (ELOB and ELOC), RBX1 and substrate-specific adapter KLHDC10. Interacts (via the 6 Kelch repeats) with PPP5C.

It is found in the nucleus. The protein resides in the cytoplasm. Its pathway is protein modification; protein ubiquitination. Its function is as follows. Substrate-recognition component of a Cul2-RING (CRL2) E3 ubiquitin-protein ligase complex of the DesCEND (destruction via C-end degrons) pathway, which recognizes a C-degron located at the extreme C-terminus of target proteins, leading to their ubiquitination and degradation. The C-degron recognized by the DesCEND pathway is usually a motif of less than ten residues and can be present in full-length proteins, truncated proteins or proteolytically cleaved forms. The CRL2(KLHDC10) complex specifically recognizes proteins with a proline-glycine (Pro-Gly) or an alanine tail (CAT tail) at the C-terminus, leading to their ubiquitination and degradation. The CRL2(KLHDC10) complex is involved in the ribosome-associated quality control (RQC) pathway, which mediates the extraction of incompletely synthesized nascent chains from stalled ribosomes: CRL2(KLHDC10) acts downstream of NEMF and recognizes CAT tails associated with stalled nascent chains, leading to their ubiquitination and degradation. Participates in the oxidative stress-induced cell death through MAP3K5 activation. Inhibits PPP5C phosphatase activity on MAP3K5. Acts as a regulator of necroptosis. In Bos taurus (Bovine), this protein is Kelch domain-containing protein 10 (KLHDC10).